We begin with the raw amino-acid sequence, 734 residues long: Photosystem I P700 chlorophyll a apoprotein A2 (734 aa).

The next 8 membrane-spanning stretches (helical) occupy residues 46–69 (IFAS…FHVA), 135–158 (LYTG…LHLQ), 175–199 (LNHH…HVAI), 273–291 (IAHH…GHMY), 330–353 (LHFQ…QHMY), 369–395 (AALY…IFFI), 417–439 (AIIS…LYVH), and 517–535 (FLVH…LILV). [4Fe-4S] cluster-binding residues include cysteine 559 and cysteine 568. The next 2 helical transmembrane spans lie at 575–596 (AFYL…YWHW) and 643–665 (LSVW…MFLI). 3 residues coordinate chlorophyll a: histidine 654, methionine 662, and tyrosine 670. Phylloquinone is bound at residue tryptophan 671. The helical transmembrane segment at 707-727 (LVGLAHFSVGYIFTYAAFLIA) threads the bilayer.

The protein belongs to the PsaA/PsaB family. The PsaA/B heterodimer binds the P700 chlorophyll special pair and subsequent electron acceptors. PSI consists of a core antenna complex that captures photons, and an electron transfer chain that converts photonic excitation into a charge separation. The eukaryotic PSI reaction center is composed of at least 11 subunits. It depends on P700 is a chlorophyll a/chlorophyll a' dimer, A0 is one or more chlorophyll a, A1 is one or both phylloquinones and FX is a shared 4Fe-4S iron-sulfur center. as a cofactor.

The protein localises to the plastid. It is found in the chloroplast thylakoid membrane. It catalyses the reaction reduced [plastocyanin] + hnu + oxidized [2Fe-2S]-[ferredoxin] = oxidized [plastocyanin] + reduced [2Fe-2S]-[ferredoxin]. In terms of biological role, psaA and PsaB bind P700, the primary electron donor of photosystem I (PSI), as well as the electron acceptors A0, A1 and FX. PSI is a plastocyanin-ferredoxin oxidoreductase, converting photonic excitation into a charge separation, which transfers an electron from the donor P700 chlorophyll pair to the spectroscopically characterized acceptors A0, A1, FX, FA and FB in turn. Oxidized P700 is reduced on the lumenal side of the thylakoid membrane by plastocyanin. This Citrus sinensis (Sweet orange) protein is Photosystem I P700 chlorophyll a apoprotein A2.